We begin with the raw amino-acid sequence, 325 residues long: Undecaprenyl-phosphate 4-deoxy-4-formamido-L-arabinose transferase (325 aa).

Helical transmembrane passes span 234-254 (LLSV…LLLI) and 269-289 (VFML…GMGL).

It belongs to the glycosyltransferase 2 family.

The protein localises to the cell inner membrane. The catalysed reaction is UDP-4-deoxy-4-formamido-beta-L-arabinose + di-trans,octa-cis-undecaprenyl phosphate = 4-deoxy-4-formamido-alpha-L-arabinopyranosyl di-trans,octa-cis-undecaprenyl phosphate + UDP. Its pathway is glycolipid biosynthesis; 4-amino-4-deoxy-alpha-L-arabinose undecaprenyl phosphate biosynthesis; 4-amino-4-deoxy-alpha-L-arabinose undecaprenyl phosphate from UDP-4-deoxy-4-formamido-beta-L-arabinose and undecaprenyl phosphate: step 1/2. The protein operates within bacterial outer membrane biogenesis; lipopolysaccharide biosynthesis. Catalyzes the transfer of 4-deoxy-4-formamido-L-arabinose from UDP to undecaprenyl phosphate. The modified arabinose is attached to lipid A and is required for resistance to polymyxin and cationic antimicrobial peptides. The chain is Undecaprenyl-phosphate 4-deoxy-4-formamido-L-arabinose transferase from Erwinia tasmaniensis (strain DSM 17950 / CFBP 7177 / CIP 109463 / NCPPB 4357 / Et1/99).